Here is a 257-residue protein sequence, read N- to C-terminus: Phosphomannomutase (257 aa).

The Nucleophile role is filled by aspartate 19. Mg(2+) contacts are provided by aspartate 19 and aspartate 21. The Proton donor/acceptor role is filled by aspartate 21. Alpha-D-mannose 1-phosphate is bound by residues arginine 28, arginine 133, arginine 144, arginine 151, serine 189, and aspartate 191. Residues aspartate 219, phenylalanine 231, aspartate 233, and threonine 236 each contribute to the Mg(2+) site.

It belongs to the eukaryotic PMM family. Homodimer.

The protein resides in the cytoplasm. The catalysed reaction is alpha-D-mannose 1-phosphate = D-mannose 6-phosphate. It participates in nucleotide-sugar biosynthesis; GDP-alpha-D-mannose biosynthesis; alpha-D-mannose 1-phosphate from D-fructose 6-phosphate: step 2/2. Its function is as follows. Involved in the synthesis of the GDP-mannose and dolichol-phosphate-mannose required for a number of critical mannosyl transfer reactions. This chain is Phosphomannomutase (pmm1), found in Schizosaccharomyces pombe (strain 972 / ATCC 24843) (Fission yeast).